Consider the following 196-residue polypeptide: Retinol-binding protein 4 (196 aa).

The N-terminal stretch at 1-21 (MAYTWRALLLLALAFLGSSMA) is a signal peptide. Intrachain disulfides connect C25–C181, C91–C195, and C141–C150. Residue Q119 participates in substrate binding.

Belongs to the calycin superfamily. Lipocalin family. Interacts with TTR. Interaction with TTR prevents its loss by filtration through the kidney glomeruli. Interacts with STRA6.

The protein localises to the secreted. Its function is as follows. Retinol-binding protein that mediates retinol transport in blood plasma. Delivers retinol from the liver stores to the peripheral tissues. Transfers the bound all-trans retinol to STRA6, that then facilitates retinol transport across the cell membrane. The chain is Retinol-binding protein 4 (RBP4) from Gallus gallus (Chicken).